A 72-amino-acid chain; its full sequence is NAD(P)H-quinone oxidoreductase subunit O (72 aa).

The protein belongs to the complex I NdhO subunit family. NDH-1 can be composed of about 15 different subunits; different subcomplexes with different compositions have been identified which probably have different functions.

Its subcellular location is the cellular thylakoid membrane. It catalyses the reaction a plastoquinone + NADH + (n+1) H(+)(in) = a plastoquinol + NAD(+) + n H(+)(out). The enzyme catalyses a plastoquinone + NADPH + (n+1) H(+)(in) = a plastoquinol + NADP(+) + n H(+)(out). In terms of biological role, NDH-1 shuttles electrons from an unknown electron donor, via FMN and iron-sulfur (Fe-S) centers, to quinones in the respiratory and/or the photosynthetic chain. The immediate electron acceptor for the enzyme in this species is believed to be plastoquinone. Couples the redox reaction to proton translocation, and thus conserves the redox energy in a proton gradient. Cyanobacterial NDH-1 also plays a role in inorganic carbon-concentration. In Crocosphaera subtropica (strain ATCC 51142 / BH68) (Cyanothece sp. (strain ATCC 51142)), this protein is NAD(P)H-quinone oxidoreductase subunit O.